Here is a 343-residue protein sequence, read N- to C-terminus: Anthranilate phosphoribosyltransferase (343 aa).

5-phospho-alpha-D-ribose 1-diphosphate-binding positions include Gly84, Gly87–Asp88, Thr92, Asn94–Thr97, Lys112–Ser120, and Ser124. Gly84 serves as a coordination point for anthranilate. Ser96 provides a ligand contact to Mg(2+). Asn115 contributes to the anthranilate binding site. Arg170 contacts anthranilate. Asp229 and Glu230 together coordinate Mg(2+).

This sequence belongs to the anthranilate phosphoribosyltransferase family. In terms of assembly, homodimer. Requires Mg(2+) as cofactor.

It catalyses the reaction N-(5-phospho-beta-D-ribosyl)anthranilate + diphosphate = 5-phospho-alpha-D-ribose 1-diphosphate + anthranilate. Its pathway is amino-acid biosynthesis; L-tryptophan biosynthesis; L-tryptophan from chorismate: step 2/5. Its function is as follows. Catalyzes the transfer of the phosphoribosyl group of 5-phosphorylribose-1-pyrophosphate (PRPP) to anthranilate to yield N-(5'-phosphoribosyl)-anthranilate (PRA). The polypeptide is Anthranilate phosphoribosyltransferase (Burkholderia vietnamiensis (strain G4 / LMG 22486) (Burkholderia cepacia (strain R1808))).